Here is a 306-residue protein sequence, read N- to C-terminus: Recombination-associated protein RdgC (306 aa).

This sequence belongs to the RdgC family.

The protein resides in the cytoplasm. Its subcellular location is the nucleoid. Its function is as follows. May be involved in recombination. This chain is Recombination-associated protein RdgC, found in Pseudomonas entomophila (strain L48).